The sequence spans 154 residues: Deoxyuridine 5'-triphosphate nucleotidohydrolase (154 aa).

Residues 64-66, Asn-77, 81-83, and Lys-91 contribute to the substrate site; these read RSG and TID.

It belongs to the dUTPase family. As to quaternary structure, homotrimer. Mg(2+) serves as cofactor.

The enzyme catalyses dUTP + H2O = dUMP + diphosphate + H(+). It participates in pyrimidine metabolism; dUMP biosynthesis; dUMP from dCTP (dUTP route): step 2/2. Functionally, this enzyme is involved in nucleotide metabolism: it produces dUMP, the immediate precursor of thymidine nucleotides and it decreases the intracellular concentration of dUTP so that uracil cannot be incorporated into DNA. The protein is Deoxyuridine 5'-triphosphate nucleotidohydrolase of Mycobacterium sp. (strain JLS).